A 283-amino-acid chain; its full sequence is 1-deoxypentalenic acid 11-beta-hydroxylase (283 aa).

Residue Arg117 participates in substrate binding. Fe cation is bound by residues His135 and Asp137. Residues 135-137 and Trp151 each bind 2-oxoglutarate; that span reads HQD. Arg186 serves as a coordination point for substrate. Position 224 (His224) interacts with Fe cation. 2-oxoglutarate is bound by residues Ser226 and Arg238. The interval 251–283 is disordered; that stretch reads HRGFNALTPWPESAKDASKGIMSKITGTPTTAE.

Belongs to the PhyH family. Requires Fe cation as cofactor. L-ascorbate serves as cofactor.

It carries out the reaction 1-deoxypentalenate + 2-oxoglutarate + O2 = 1-deoxy-11beta-hydroxypentalenate + succinate + CO2. The protein operates within antibiotic biosynthesis; pentalenolactone biosynthesis. Functionally, catalyzes the conversion of 1-deoxypentalenic acid to 11-beta-hydroxy-1-deoxypentalenic acid in the biosynthesis of pentalenolactone antibiotic. The chain is 1-deoxypentalenic acid 11-beta-hydroxylase (pntH) from Streptomyces arenae.